The following is a 646-amino-acid chain: Glutamine--tRNA ligase protein virJ (646 aa).

The segment at N25 to E65 is disordered. Residues A38–A61 are compositionally biased toward low complexity. The 'HIGH' region signature appears at P98–H108. ATP-binding positions include E99–N101 and H105–A111. Residues D147 and Y296 each contribute to the L-glutamine site. ATP is bound by residues T315, R344–L345, and M352–K354. The short motif at I351–R355 is the 'KMSKS' region element.

It belongs to the class-I aminoacyl-tRNA synthetase family.

The enzyme catalyses tRNA(Gln) + L-glutamine + ATP = L-glutaminyl-tRNA(Gln) + AMP + diphosphate. Functionally, glutamine--tRNA ligase; part of the gene cluster that mediates the biosynthesis of virensols and trichoxide, fungal natural products that contain or are derived from a salicylaldehyde core. VirJ does not seem to play any role in virensols and trichoxide biosynthesis. The sequence is that of Glutamine--tRNA ligase protein virJ from Hypocrea virens (strain Gv29-8 / FGSC 10586) (Gliocladium virens).